Here is a 649-residue protein sequence, read N- to C-terminus: Acid beta-fructofuranosidase (649 aa).

Over 1–22 the chain is Cytoplasmic; the sequence is MEHHKPLLPTSSHAAPTSSTRK. A propeptide spans 1-101 (removed in mature form); the sequence is MEHHKPLLPT…NLLFAGEGGA (101 aa). The chain crosses the membrane as a helical; Signal-anchor for type II membrane protein span at residues 23-43; sequence DLLFVLCGLLFLSSLVAYGGY. Residues 44–649 are Lumenal-facing; it reads RASGVPHAHL…PFPFNPDQKS (606 aa). The tract at residues 52 to 75 is disordered; sequence HLSSPTSNHQQDHQSPTSLPSSKW. The span at 54–72 shows a compositional bias: polar residues; that stretch reads SSPTSNHQQDHQSPTSLPS. Substrate contacts are provided by residues 127-130, Q146, W154, and 189-190; these read WMND and WT. D130 is an active-site residue. A glycan (N-linked (GlcNAc...) (complex) asparagine) is linked at N210. 253–254 contacts substrate; that stretch reads RD. The N-linked (GlcNAc...) (complex) asparagine glycan is linked to N275. Residues E308 and D341 each contribute to the substrate site. A disulfide bond links C498 and C546. N-linked (GlcNAc...) (high mannose) asparagine glycosylation is present at N618.

It belongs to the glycosyl hydrolase 32 family. In terms of assembly, present in two forms, a 70 kDa monomer and a heterodimer of the 30 kDa and 38 kDa subunits. The ratio of the levels of the two forms within cells appears to be regulated developmentally.

The protein resides in the membrane. It localises to the vacuole lumen. It catalyses the reaction Hydrolysis of terminal non-reducing beta-D-fructofuranoside residues in beta-D-fructofuranosides.. It participates in glycan biosynthesis; sucrose metabolism. Functionally, possible role in the continued mobilization of sucrose to sink organs. The sequence is that of Acid beta-fructofuranosidase (INVA) from Vigna radiata var. radiata (Mung bean).